The sequence spans 632 residues: Probable potassium transport system protein Kup (632 aa).

A run of 12 helical transmembrane segments spans residues 19–39, 59–79, 110–130, 146–166, 178–198, 221–241, 256–276, 298–318, 346–366, 375–395, 403–423, and 428–448; these read LVVG…LYSL, IISM…VMFV, LIMM…VITP, PGLS…LFFI, FGPI…IHLV, LQAF…EALY, WFVL…AMLL, MVLL…SGAF, IYMP…VLAF, AYGI…ALVM, PALV…FFAA, and IAEG…LLMT.

It belongs to the HAK/KUP transporter (TC 2.A.72) family.

Its subcellular location is the cell inner membrane. It carries out the reaction K(+)(in) + H(+)(in) = K(+)(out) + H(+)(out). Functionally, transport of potassium into the cell. Likely operates as a K(+):H(+) symporter. The chain is Probable potassium transport system protein Kup from Cupriavidus metallidurans (strain ATCC 43123 / DSM 2839 / NBRC 102507 / CH34) (Ralstonia metallidurans).